Reading from the N-terminus, the 91-residue chain is Beta-microseminoprotein (91 aa).

Cystine bridges form between Cys-2–Cys-54, Cys-22–Cys-46, Cys-41–Cys-75, Cys-44–Cys-53, and Cys-68–Cys-88.

Expressed in ciliated epithelium of nidamental gland and in secretory-like cells in accessory nidamental gland (at protein level). Expressed in ovary, nidamental gland and accessory nidamental gland.

It localises to the secreted. Its function is as follows. Acts as a pheromone. Triggers aggressive behaviors in males such as fin beating, lunging and grabbing. These behaviors form part of the competition for fertile females. This chain is Beta-microseminoprotein, found in Doryteuthis pealeii (Longfin inshore squid).